The primary structure comprises 339 residues: Mycothiol acetyltransferase (339 aa).

2 consecutive N-acetyltransferase domains span residues 8-174 (YEQL…QGLT) and 176-339 (LTYP…GELN). E39 serves as a coordination point for 1D-myo-inositol 2-(L-cysteinylamino)-2-deoxy-alpha-D-glucopyranoside. 85–87 (LAV) contacts acetyl-CoA. 1D-myo-inositol 2-(L-cysteinylamino)-2-deoxy-alpha-D-glucopyranoside-binding residues include E207, K254, and E270. Position 274-276 (274-276 (VCL)) interacts with acetyl-CoA. 1D-myo-inositol 2-(L-cysteinylamino)-2-deoxy-alpha-D-glucopyranoside is bound at residue Y308.

This sequence belongs to the acetyltransferase family. MshD subfamily. Monomer.

It catalyses the reaction 1D-myo-inositol 2-(L-cysteinylamino)-2-deoxy-alpha-D-glucopyranoside + acetyl-CoA = mycothiol + CoA + H(+). Its function is as follows. Catalyzes the transfer of acetyl from acetyl-CoA to desacetylmycothiol (Cys-GlcN-Ins) to form mycothiol. The protein is Mycothiol acetyltransferase of Corynebacterium urealyticum (strain ATCC 43042 / DSM 7109).